Consider the following 216-residue polypeptide: Probable transaldolase (216 aa).

Lysine 83 (schiff-base intermediate with substrate) is an active-site residue.

It belongs to the transaldolase family. Type 3B subfamily.

It is found in the cytoplasm. The enzyme catalyses D-sedoheptulose 7-phosphate + D-glyceraldehyde 3-phosphate = D-erythrose 4-phosphate + beta-D-fructose 6-phosphate. The protein operates within carbohydrate degradation; pentose phosphate pathway; D-glyceraldehyde 3-phosphate and beta-D-fructose 6-phosphate from D-ribose 5-phosphate and D-xylulose 5-phosphate (non-oxidative stage): step 2/3. Transaldolase is important for the balance of metabolites in the pentose-phosphate pathway. The sequence is that of Probable transaldolase from Hyphomonas neptunium (strain ATCC 15444).